The following is a 205-amino-acid chain: Putative 3-methyladenine DNA glycosylase (205 aa).

It belongs to the DNA glycosylase MPG family.

This is Putative 3-methyladenine DNA glycosylase from Bacillus cereus (strain ATCC 14579 / DSM 31 / CCUG 7414 / JCM 2152 / NBRC 15305 / NCIMB 9373 / NCTC 2599 / NRRL B-3711).